The following is a 681-amino-acid chain: Methionine--tRNA ligase (681 aa).

The 'HIGH' region signature appears at 14-24 (PYANGSIHLGH). Zn(2+) contacts are provided by Cys-145, Cys-148, Cys-158, and Cys-161. A 'KMSKS' region motif is present at residues 331 to 335 (KMSKS). Residue Lys-334 participates in ATP binding. One can recognise a tRNA-binding domain in the interval 579–681 (TFAAVDLRVA…SGAKPGQRIK (103 aa)).

It belongs to the class-I aminoacyl-tRNA synthetase family. MetG type 1 subfamily. Homodimer. Requires Zn(2+) as cofactor.

It is found in the cytoplasm. The catalysed reaction is tRNA(Met) + L-methionine + ATP = L-methionyl-tRNA(Met) + AMP + diphosphate. Is required not only for elongation of protein synthesis but also for the initiation of all mRNA translation through initiator tRNA(fMet) aminoacylation. In Pseudomonas putida (strain W619), this protein is Methionine--tRNA ligase.